Reading from the N-terminus, the 302-residue chain is Recombination-associated protein RdgC (302 aa).

Belongs to the RdgC family.

It localises to the cytoplasm. The protein resides in the nucleoid. In terms of biological role, may be involved in recombination. This chain is Recombination-associated protein RdgC, found in Psychromonas ingrahamii (strain DSM 17664 / CCUG 51855 / 37).